A 226-amino-acid chain; its full sequence is Killer cell lectin-like receptor subfamily E member 1 (226 aa).

The interval 1–28 (MDEAPVTRSTLNVNSQQKSKAKNKIKNT) is disordered. Residues 1–68 (MDEAPVTRST…GKGNCSPPWR (68 aa)) lie on the Cytoplasmic side of the membrane. The segment covering 7–18 (TRSTLNVNSQQK) has biased composition (polar residues). The helical; Signal-anchor for type II membrane protein transmembrane segment at 69–89 (LLSSVLGAMCLLLMAVAMVMT) threads the bilayer. Over 90 to 226 (TFTTKSSSER…ANKLTYICKK (137 aa)) the chain is Extracellular. Cystine bridges form between Cys-113-Cys-124, Cys-141-Cys-224, and Cys-202-Cys-216. Positions 120–225 (FRCSCYFFSK…CANKLTYICK (106 aa)) constitute a C-type lectin domain. An N-linked (GlcNAc...) asparagine glycan is attached at Asn-145.

In terms of assembly, heterodimer; with KLRI1 or KLRI2. As to expression, expressed in natural killer (NK) cells (at protein level). Also detected in natural killer T (NKT) cells (at protein level). Has little or no expression in T cells (at protein level).

The protein localises to the cell membrane. In terms of biological role, lectin-like receptor for natural killer (NK) cells. Can either inhibit or activate NK cell cytotoxic activity, depending on its binding partner. Heterodimer formation with KLRI1 mediates NK cell inhibition whereas heterodimer formation with KLRI2 mediates NK cell activation. Plays a role in allogeneic recognition by the immune system. The protein is Killer cell lectin-like receptor subfamily E member 1 of Mus musculus (Mouse).